We begin with the raw amino-acid sequence, 756 residues long: 1-phosphatidylinositol 4,5-bisphosphate phosphodiesterase delta-1 (756 aa).

A PH domain is found at 21–130; that stretch reads ALLKGSQLLK…WVQGLRKIIH (110 aa). The substrate binding stretch occupies residues 30–57; it reads KVKSSSWRRERFYKLQEDCKTIWQESRK. 2 consecutive EF-hand domains span residues 140–175 and 176–211; these read KLQHWIHSCLRKADKNKDNKMNFKELKDFLKELNIQ and VDDGYARKIFRECDHSQTDSLEDEEIETFYKMLTQR. Residues Asp-153, Asn-155, Asp-157, Lys-159, Glu-164, Asp-189, Ser-191, Thr-193, Ser-195, and Glu-200 each contribute to the Ca(2+) site. Ser-191 carries an O-linked (GlcNAc) serine glycan. Thr-193 carries an O-linked (GlcNAc) threonine glycan. One can recognise a PI-PLC X-box domain in the interval 296–440; the sequence is QDMDQPLSHY…LKGKILLKGK (145 aa). His-311 is a catalytic residue. Residues Asn-312, Glu-341, and Asp-343 each coordinate Ca(2+). His-356 is a catalytic residue. Glu-390 is a binding site for Ca(2+). Residues Lys-438 and Lys-440 each contribute to the substrate site. At Thr-457 the chain carries Phosphothreonine. Ser-460 carries the phosphoserine modification. The PI-PLC Y-box domain maps to 492–609; sequence LSDMIIYCKS…GYVLKPAFLR (118 aa). Residues Ser-522 and Arg-549 each contribute to the substrate site. The C2 domain maps to 609-737; that stretch reads RDPNTTFNSR…QGYRHVHLLS (129 aa). Positions 651, 653, 677, 706, 707, and 708 each coordinate Ca(2+).

Interacts with TGM2. Requires Ca(2+) as cofactor.

The catalysed reaction is a 1,2-diacyl-sn-glycero-3-phospho-(1D-myo-inositol-4,5-bisphosphate) + H2O = 1D-myo-inositol 1,4,5-trisphosphate + a 1,2-diacyl-sn-glycerol + H(+). It catalyses the reaction a 1,2-diacyl-sn-glycero-3-phospho-(1D-myo-inositol) + H2O = 1D-myo-inositol 1-phosphate + a 1,2-diacyl-sn-glycerol + H(+). Its function is as follows. The production of the second messenger molecules diacylglycerol (DAG) and inositol 1,4,5-trisphosphate (IP3) is mediated by activated phosphatidylinositol-specific phospholipase C enzymes. Essential for trophoblast and placental development. Binds phosphatidylinositol 4,5-bisphosphate. The chain is 1-phosphatidylinositol 4,5-bisphosphate phosphodiesterase delta-1 from Rattus norvegicus (Rat).